A 365-amino-acid polypeptide reads, in one-letter code: Pre-small/secreted glycoprotein (365 aa).

A signal peptide spans 1-32 (MGASGILQLPRERFRKTSFFVWVIILFHKVFS). N-linked (GlcNAc...) asparagine; by host glycosylation is present at N40. Intrachain disulfides connect C108–C135 and C121–C147. N204, N228, N257, and N268 each carry an N-linked (GlcNAc...) asparagine; by host glycan.

Belongs to the filoviruses glycoprotein family. Homodimer; disulfide-linked. The homodimers are linked by two disulfide bonds in a parallel orientation. As to quaternary structure, monomer. Post-translationally, this precursor is processed into mature sGP and delta-peptide by host furin or furin-like proteases. The cleavage site corresponds to the furin optimal cleavage sequence [KR]-X-[KR]-R. N-glycosylated. In terms of processing, O-glycosylated.

The protein resides in the secreted. Functionally, seems to possess an anti-inflammatory activity as it can reverse the barrier-decreasing effects of TNF alpha. Might therefore contribute to the lack of inflammatory reaction seen during infection in spite the of extensive necrosis and massive virus production. Does not seem to be involved in activation of primary macrophages. Does not seem to interact specifically with neutrophils. Viroporin that permeabilizes mammalian cell plasma membranes. It acts by altering permeation of ionic compounds and small molecules. This activity may lead to viral enterotoxic activity. In Epomops franqueti (Franquet's epauletted fruit bat), this protein is Pre-small/secreted glycoprotein (GP).